Reading from the N-terminus, the 165-residue chain is Peptide deformylase (165 aa).

Positions 88 and 130 each coordinate Fe cation. The active site involves E131. Position 134 (H134) interacts with Fe cation.

The protein belongs to the polypeptide deformylase family. Fe(2+) serves as cofactor.

The enzyme catalyses N-terminal N-formyl-L-methionyl-[peptide] + H2O = N-terminal L-methionyl-[peptide] + formate. Its function is as follows. Removes the formyl group from the N-terminal Met of newly synthesized proteins. Requires at least a dipeptide for an efficient rate of reaction. N-terminal L-methionine is a prerequisite for activity but the enzyme has broad specificity at other positions. The chain is Peptide deformylase from Borreliella burgdorferi (strain ATCC 35210 / DSM 4680 / CIP 102532 / B31) (Borrelia burgdorferi).